The primary structure comprises 162 residues: MARVYILFFSVFFVFPLFSEDAARDVEPSDAPVPYEDTEFSLWQKELYRFEALSIGAFPIVTLLSFITYDIIRLIQQWSTKPPTWWALIIPGAELPPLSTKERAIVFGVAVGISVTIGLIDVTYRAVKRAIHRRSLERSQLVPDPIELVPLDSFVEGTDDST.

Positions 1 to 19 are cleaved as a signal peptide; sequence MARVYILFFSVFFVFPLFS. The next 2 membrane-spanning stretches (helical) occupy residues 53–75 and 105–127; these read LSIG…IRLI and IVFG…YRAV.

The protein localises to the cell membrane. This is an uncharacterized protein from Treponema pallidum (strain Nichols).